A 545-amino-acid chain; its full sequence is Eukaryotic translation initiation factor 3 subunit D-2 (545 aa).

Basic residues predominate over residues 99 to 113; sequence FRGNIRNNPRTRGRT. The disordered stretch occupies residues 99-158; the sequence is FRGNIRNNPRTRGRTGRGGAVTGIGGNQPGVGVNERTKYGKGRDNRRQMGRRFGRNAPTR. Residues 114 to 127 are compositionally biased toward gly residues; the sequence is GRGGAVTGIGGNQP. Residues 133 to 145 are compositionally biased toward basic and acidic residues; the sequence is ERTKYGKGRDNRR. Residues 287–301 are RNA gate; sequence QFDLLTVNETALEPP.

It belongs to the eIF-3 subunit D family. As to quaternary structure, component of the eukaryotic translation initiation factor 3 (eIF-3) complex. The eIF-3 complex interacts with pix.

The protein resides in the cytoplasm. Its function is as follows. mRNA cap-binding component of the eukaryotic translation initiation factor 3 (eIF-3) complex, which is involved in protein synthesis of a specialized repertoire of mRNAs and, together with other initiation factors, stimulates binding of mRNA and methionyl-tRNAi to the 40S ribosome. The eIF-3 complex specifically targets and initiates translation of a subset of mRNAs involved in cell proliferation. In the eIF-3 complex, eif3d specifically recognizes and binds the 7-methylguanosine cap of a subset of mRNAs. The chain is Eukaryotic translation initiation factor 3 subunit D-2 from Drosophila persimilis (Fruit fly).